The sequence spans 473 residues: Lactate utilization protein B (473 aa).

2 consecutive 4Fe-4S ferredoxin-type domains span residues 302 to 332 (GSEF…GHSY) and 351 to 380 (YDDY…LHDL). Residues Cys311, Cys314, Cys317, Cys321, Cys364, Cys367, and Cys371 each coordinate [4Fe-4S] cluster.

The protein belongs to the LutB/YkgF family.

Functionally, is involved in L-lactate degradation and allows cells to grow with lactate as the sole carbon source. Has probably a role as an electron transporter during oxidation of L-lactate. In Bacillus anthracis (strain A0248), this protein is Lactate utilization protein B.